The following is a 123-amino-acid chain: Heat-labile enterotoxin IIA, B chain (123 aa).

A signal peptide spans 1–19; sequence MSSKKIIGAFVLMTGILSG. The cysteines at positions 33 and 104 are disulfide-linked.

Heterohexamer of one A chain and of five B chains.

Functionally, the biological activity of the toxin is produced by the A chain, which activates intracellular adenyl cyclase. The protein is Heat-labile enterotoxin IIA, B chain of Escherichia coli.